We begin with the raw amino-acid sequence, 172 residues long: S-ribosylhomocysteine lyase (172 aa).

Fe cation is bound by residues His54, His58, and Cys128.

It belongs to the LuxS family. In terms of assembly, homodimer. It depends on Fe cation as a cofactor.

It catalyses the reaction S-(5-deoxy-D-ribos-5-yl)-L-homocysteine = (S)-4,5-dihydroxypentane-2,3-dione + L-homocysteine. Its function is as follows. Involved in the synthesis of autoinducer 2 (AI-2) which is secreted by bacteria and is used to communicate both the cell density and the metabolic potential of the environment. The regulation of gene expression in response to changes in cell density is called quorum sensing. Catalyzes the transformation of S-ribosylhomocysteine (RHC) to homocysteine (HC) and 4,5-dihydroxy-2,3-pentadione (DPD). In Vibrio cholerae serotype O1 (strain ATCC 39541 / Classical Ogawa 395 / O395), this protein is S-ribosylhomocysteine lyase.